The chain runs to 430 residues: MSKIVDIKAREILDSRGNPTIEADVILESGASGSACAPSGASTGSREALELRDGDKSRYLGKGVTKAVGNVNSAIRELLVGMEVSDQKALDQAMLDADGTENKGNLGANAILAVSLAAAKAAAVDQGKPLYEYISDLQDDDNEYSLPVPMMNIINGGEHADNNVDIQEFMIQPVGAPTVAEAIRYGAEIFHALKGVLKKRGLNTAVGDEGGFAPNLPSNEAALEAIMEAIEIAGYKAGDDVTLALDCAASEFYKDGKYVLAGEDRSMNSEEFADYLAELCDRYPIISIEDGMDESDWDGWKILTEKLGKKVQLVGDDLFVTNTRILQRGIDEKVANSILIKFNQIGSLTETLDAIKMAKDAGYTAVISHRSGETADTTIADLAVATAAGQIKTGSLCRSDRVAKYNRLIRIEQELGRAAYHGRKEFKLLG.

Gln167 serves as a coordination point for (2R)-2-phosphoglycerate. Glu209 serves as the catalytic Proton donor. Mg(2+) contacts are provided by Asp246, Glu289, and Asp316. (2R)-2-phosphoglycerate is bound by residues Lys341, Arg370, Ser371, and Lys392. Catalysis depends on Lys341, which acts as the Proton acceptor.

It belongs to the enolase family. As to quaternary structure, component of the RNA degradosome, a multiprotein complex involved in RNA processing and mRNA degradation. Requires Mg(2+) as cofactor.

The protein resides in the cytoplasm. It localises to the secreted. Its subcellular location is the cell surface. The catalysed reaction is (2R)-2-phosphoglycerate = phosphoenolpyruvate + H2O. It participates in carbohydrate degradation; glycolysis; pyruvate from D-glyceraldehyde 3-phosphate: step 4/5. Catalyzes the reversible conversion of 2-phosphoglycerate (2-PG) into phosphoenolpyruvate (PEP). It is essential for the degradation of carbohydrates via glycolysis. This Alcanivorax borkumensis (strain ATCC 700651 / DSM 11573 / NCIMB 13689 / SK2) protein is Enolase.